A 956-amino-acid polypeptide reads, in one-letter code: Pollen-specific leucine-rich repeat extensin-like protein 1 (956 aa).

The first 30 residues, 1–30 (MTRRTMEKPFGCFLLLFCFTISIFFYSAAA), serve as a signal peptide directing secretion. LRR repeat units lie at residues 39 to 59 (LTRRQLLALSENGDLPDDIEY), 60 to 84 (EVDLDLKFANNRLKRAYIALQAWKK), 119 to 143 (VLVVAGIDLNHADIAGYLPPELGLL), 144 to 166 (TDVALFHVNSNRFCGVIPKSLSK), 168 to 191 (TLMYEFDVSNNRFVGPFPTVALSW), 192 to 215 (PSLKFLDIRYNDFEGKLPPEIFDK), 217 to 238 (LDAIFLNNNRFESTIPETIGKS), 240 to 261 (ASVVTFAHNKFSGCIPKTIGQM), 262 to 285 (KNLNEIVFIGNNLSGCLPNEIGSL), 287 to 309 (NVTVFDASSNGFVGSLPSTLSGL), and 310 to 332 (ANVEQMDFSYNKFTGFVTDNICK). Residues Asn273 and Asn287 are each glycosylated (N-linked (GlcNAc...) asparagine). Asn338 carries N-linked (GlcNAc...) asparagine glycosylation. Positions 355 to 377 (PGSSQEKQFDDTSNCLQNRPNQK) are enriched in polar residues. 2 disordered regions span residues 355-380 (PGSSQEKQFDDTSNCLQNRPNQKSAK) and 397-956 (CAGG…FPGY). Residues 408-417 (SPKPTPTPKA) show a composition bias toward pro residues. Basic and acidic residues-rich tracts occupy residues 431-441 (EPSKPKPEESP) and 452-534 (TPSH…EESP). The segment covering 640–830 (QSPPVHSPPP…KPVTPLPPAT (191 aa)) has biased composition (pro residues). The interval 651 to 956 (PPVHSPPPPV…SPPPPMFPGY (306 aa)) is contains the Ser-Pro(4) repeats. The segment covering 837 to 852 (PTPSSSESGEISTPVQ) has biased composition (polar residues). Positions 947-956 (SPPPPMFPGY) are enriched in pro residues.

In terms of processing, hydroxylated on proline residues in the S-P-P-P-P repeat. Post-translationally, O-glycosylated on hydroxyprolines. In terms of tissue distribution, expressed in flowers, stamen, pollen, and pollinated carpels.

It localises to the secreted. The protein localises to the cell wall. In terms of biological role, modulates cell morphogenesis by regulating cell wall formation and assembly, and/or growth polarization. The chain is Pollen-specific leucine-rich repeat extensin-like protein 1 (PEX1) from Arabidopsis thaliana (Mouse-ear cress).